The following is a 228-amino-acid chain: Cytidylate kinase (228 aa).

Residue 10–18 (GPSGSGKGT) coordinates ATP.

This sequence belongs to the cytidylate kinase family. Type 1 subfamily.

The protein resides in the cytoplasm. It carries out the reaction CMP + ATP = CDP + ADP. The catalysed reaction is dCMP + ATP = dCDP + ADP. The sequence is that of Cytidylate kinase from Acinetobacter baumannii (strain SDF).